The sequence spans 422 residues: L-threonine dehydratase biosynthetic IlvA (422 aa).

The residue at position 56 (Lys-56) is an N6-(pyridoxal phosphate)lysine. Residues Asn-83, 189–193 (GGGGL), and Ser-315 each bind pyridoxal 5'-phosphate. In terms of domain architecture, ACT-like spans 339-413 (HYFILNFPQR…FDPSNIYINE (75 aa)).

Belongs to the serine/threonine dehydratase family. In terms of assembly, homotetramer. The cofactor is pyridoxal 5'-phosphate.

The catalysed reaction is L-threonine = 2-oxobutanoate + NH4(+). Its pathway is amino-acid biosynthesis; L-isoleucine biosynthesis; 2-oxobutanoate from L-threonine: step 1/1. Catalyzes the anaerobic formation of alpha-ketobutyrate and ammonia from threonine in a two-step reaction. The first step involved a dehydration of threonine and a production of enamine intermediates (aminocrotonate), which tautomerizes to its imine form (iminobutyrate). Both intermediates are unstable and short-lived. The second step is the nonenzymatic hydrolysis of the enamine/imine intermediates to form 2-ketobutyrate and free ammonia. In the low water environment of the cell, the second step is accelerated by RidA. The chain is L-threonine dehydratase biosynthetic IlvA (ilvA) from Staphylococcus aureus (strain Mu50 / ATCC 700699).